Reading from the N-terminus, the 130-residue chain is Small ribosomal subunit protein uS8 (130 aa).

Belongs to the universal ribosomal protein uS8 family. In terms of assembly, part of the 30S ribosomal subunit. Contacts proteins S5 and S12.

Functionally, one of the primary rRNA binding proteins, it binds directly to 16S rRNA central domain where it helps coordinate assembly of the platform of the 30S subunit. This Pectobacterium carotovorum subsp. carotovorum (strain PC1) protein is Small ribosomal subunit protein uS8.